The sequence spans 310 residues: HPr kinase/phosphorylase (310 aa).

Residues H138 and K159 contribute to the active site. 153-160 (GKSGVGKS) is a binding site for ATP. S160 provides a ligand contact to Mg(2+). Residue D177 is the Proton acceptor; for phosphorylation activity. Proton donor; for dephosphorylation activity of the active site. Residues 201-210 (LEIRGLGIIN) form an important for the catalytic mechanism of both phosphorylation and dephosphorylation region. E202 contributes to the Mg(2+) binding site. R243 is a catalytic residue. The tract at residues 264 to 269 (PVRPGR) is important for the catalytic mechanism of dephosphorylation.

The protein belongs to the HPrK/P family. In terms of assembly, homohexamer. Mg(2+) is required as a cofactor.

It catalyses the reaction [HPr protein]-L-serine + ATP = [HPr protein]-O-phospho-L-serine + ADP + H(+). The enzyme catalyses [HPr protein]-O-phospho-L-serine + phosphate + H(+) = [HPr protein]-L-serine + diphosphate. Its function is as follows. Catalyzes the ATP- as well as the pyrophosphate-dependent phosphorylation of a specific serine residue in HPr, a phosphocarrier protein of the phosphoenolpyruvate-dependent sugar phosphotransferase system (PTS). HprK/P also catalyzes the pyrophosphate-producing, inorganic phosphate-dependent dephosphorylation (phosphorolysis) of seryl-phosphorylated HPr (P-Ser-HPr). The two antagonistic activities of HprK/P are regulated by several intracellular metabolites, which change their concentration in response to the absence or presence of rapidly metabolisable carbon sources (glucose, fructose, etc.) in the growth medium. Also phosphorylates/dephosphorylates the HPr-like catabolite repression protein crh on a specific serine residue. Therefore, by controlling the phosphorylation state of HPr and crh, HPrK/P is a sensor enzyme that plays a major role in the regulation of carbon metabolism and sugar transport: it mediates carbon catabolite repression (CCR), and regulates PTS-catalyzed carbohydrate uptake and inducer exclusion. The polypeptide is HPr kinase/phosphorylase (Bacillus licheniformis (strain ATCC 14580 / DSM 13 / JCM 2505 / CCUG 7422 / NBRC 12200 / NCIMB 9375 / NCTC 10341 / NRRL NRS-1264 / Gibson 46)).